A 72-amino-acid chain; its full sequence is Translation initiation factor IF-1 (72 aa).

The 72-residue stretch at 1–72 (MAKADVIEVE…TKGRITFRFK (72 aa)) folds into the S1-like domain.

It belongs to the IF-1 family. Component of the 30S ribosomal translation pre-initiation complex which assembles on the 30S ribosome in the order IF-2 and IF-3, IF-1 and N-formylmethionyl-tRNA(fMet); mRNA recruitment can occur at any time during PIC assembly.

The protein localises to the cytoplasm. One of the essential components for the initiation of protein synthesis. Stabilizes the binding of IF-2 and IF-3 on the 30S subunit to which N-formylmethionyl-tRNA(fMet) subsequently binds. Helps modulate mRNA selection, yielding the 30S pre-initiation complex (PIC). Upon addition of the 50S ribosomal subunit IF-1, IF-2 and IF-3 are released leaving the mature 70S translation initiation complex. The protein is Translation initiation factor IF-1 of Limosilactobacillus reuteri (strain DSM 20016) (Lactobacillus reuteri).